We begin with the raw amino-acid sequence, 98 residues long: NADH-ubiquinone oxidoreductase chain 4L (98 aa).

3 helical membrane passes run 2-22 (PSIS…MLIF), 29-49 (SLLC…LTIL), and 61-81 (ILLL…LVTV).

This sequence belongs to the complex I subunit 4L family. In terms of assembly, core subunit of respiratory chain NADH dehydrogenase (Complex I) which is composed of 45 different subunits.

It localises to the mitochondrion inner membrane. The enzyme catalyses a ubiquinone + NADH + 5 H(+)(in) = a ubiquinol + NAD(+) + 4 H(+)(out). Its function is as follows. Core subunit of the mitochondrial membrane respiratory chain NADH dehydrogenase (Complex I) which catalyzes electron transfer from NADH through the respiratory chain, using ubiquinone as an electron acceptor. Part of the enzyme membrane arm which is embedded in the lipid bilayer and involved in proton translocation. The polypeptide is NADH-ubiquinone oxidoreductase chain 4L (MT-ND4L) (Lemur catta (Ring-tailed lemur)).